Consider the following 270-residue polypeptide: 4-hydroxy-tetrahydrodipicolinate reductase (270 aa).

NAD(+) is bound by residues 8-13 (GAAGRM) and Glu34. Arg35 contributes to the NADP(+) binding site. Residues 98–100 (GST) and 122–125 (SPNM) each bind NAD(+). The active-site Proton donor/acceptor is the His155. His156 contributes to the (S)-2,3,4,5-tetrahydrodipicolinate binding site. The active-site Proton donor is the Lys159. Residue 165–166 (GT) participates in (S)-2,3,4,5-tetrahydrodipicolinate binding.

It belongs to the DapB family.

The protein resides in the cytoplasm. It catalyses the reaction (S)-2,3,4,5-tetrahydrodipicolinate + NAD(+) + H2O = (2S,4S)-4-hydroxy-2,3,4,5-tetrahydrodipicolinate + NADH + H(+). It carries out the reaction (S)-2,3,4,5-tetrahydrodipicolinate + NADP(+) + H2O = (2S,4S)-4-hydroxy-2,3,4,5-tetrahydrodipicolinate + NADPH + H(+). It functions in the pathway amino-acid biosynthesis; L-lysine biosynthesis via DAP pathway; (S)-tetrahydrodipicolinate from L-aspartate: step 4/4. Its function is as follows. Catalyzes the conversion of 4-hydroxy-tetrahydrodipicolinate (HTPA) to tetrahydrodipicolinate. This is 4-hydroxy-tetrahydrodipicolinate reductase from Anaeromyxobacter dehalogenans (strain 2CP-C).